Reading from the N-terminus, the 343-residue chain is Major outer membrane protein (343 aa).

A signal peptide spans 1 to 20 (MKKTIVALAVAAVAATSANA).

As to quaternary structure, disulfide bond interactions within and between MOMP molecules and other components form high molecular-weight oligomers.

It localises to the cell outer membrane. Structural rigidity of the outer membrane of elementary bodies and porin forming, permitting diffusion of solutes through the intracellular reticulate body membrane. The sequence is that of Major outer membrane protein (ompH) from Pasteurella multocida.